The following is a 148-amino-acid chain: 3-dehydroquinate dehydratase (148 aa).

The active-site Proton acceptor is the Tyr-23. Positions 75, 81, and 88 each coordinate substrate. His-101 acts as the Proton donor in catalysis. Residues Leu-102–Ser-103 and Arg-112 contribute to the substrate site.

The protein belongs to the type-II 3-dehydroquinase family. As to quaternary structure, homododecamer.

It catalyses the reaction 3-dehydroquinate = 3-dehydroshikimate + H2O. It functions in the pathway metabolic intermediate biosynthesis; chorismate biosynthesis; chorismate from D-erythrose 4-phosphate and phosphoenolpyruvate: step 3/7. Its function is as follows. Catalyzes a trans-dehydration via an enolate intermediate. In Xylella fastidiosa (strain M23), this protein is 3-dehydroquinate dehydratase.